Reading from the N-terminus, the 382-residue chain is S-adenosylmethionine synthase (382 aa).

An ATP-binding site is contributed by H15. Residue D17 participates in Mg(2+) binding. Residue E43 coordinates K(+). Residues E56 and Q99 each contribute to the L-methionine site. The interval 99–109 (QSPDINQGVDR) is flexible loop. ATP-binding positions include 164–166 (DAK), 230–231 (RF), D239, 245–246 (RK), A262, and K266. D239 is a binding site for L-methionine. An L-methionine-binding site is contributed by K270.

It belongs to the AdoMet synthase family. In terms of assembly, homotetramer; dimer of dimers. Requires Mg(2+) as cofactor. K(+) is required as a cofactor.

The protein localises to the cytoplasm. The catalysed reaction is L-methionine + ATP + H2O = S-adenosyl-L-methionine + phosphate + diphosphate. It functions in the pathway amino-acid biosynthesis; S-adenosyl-L-methionine biosynthesis; S-adenosyl-L-methionine from L-methionine: step 1/1. In terms of biological role, catalyzes the formation of S-adenosylmethionine (AdoMet) from methionine and ATP. The overall synthetic reaction is composed of two sequential steps, AdoMet formation and the subsequent tripolyphosphate hydrolysis which occurs prior to release of AdoMet from the enzyme. The sequence is that of S-adenosylmethionine synthase from Glaesserella parasuis serovar 5 (strain SH0165) (Haemophilus parasuis).